Reading from the N-terminus, the 441-residue chain is Chitinase-like protein Idgf3 (441 aa).

Positions Met-1–Ala-23 are cleaved as a signal peptide. Residues Pro-25–Leu-441 form the GH18 domain. Cys-29 and Cys-56 are oxidised to a cystine. A glycan (N-linked (GlcNAc...) asparagine) is linked at Asn-221. Residues Gly-310–Lys-331 are disordered. Cys-342 and Cys-425 are joined by a disulfide.

Belongs to the glycosyl hydrolase 18 family. IDGF subfamily. Glycosylated.

It localises to the secreted. In terms of biological role, cooperates with insulin-like peptides to stimulate the proliferation, polarization and motility of imaginal disk cells. May act by stabilizing the binding of insulin-like peptides to its receptor through a simultaneous interaction with both molecules to form a multiprotein signaling complex. This chain is Chitinase-like protein Idgf3 (Idgf3), found in Drosophila simulans (Fruit fly).